Reading from the N-terminus, the 268-residue chain is MLGFFAVYGNPITHSKSPFLHNYAFTKLGLSGYYSRILLDKGANLRQNFLSNGLSGANITLPFKEEAFNQCDEVRGVAQNIGACNTWVLEDKNHLVGYNTDAQGFYECIKEYKIKNALIIGAGGSAKAVAMILQSHNIPTTLINRSVQNLSFFVHKGFECYVNSEFKPTCSYDILINTTSAGLNDNLLPCDESQLKELCSCGKYAFDLIYGKCTPFLALAQSFHLSCSDGKEMLINQAALSFELFCKQKYNKGNLEIQRIASFMNEIL.

Residues 15-17 (SKS) and T60 contribute to the shikimate site. The Proton acceptor role is filled by K64. Shikimate is bound by residues N85 and D101. NADP(+) contacts are provided by residues 121-125 (GAGGS) and L208. Y210 is a shikimate binding site. G230 contributes to the NADP(+) binding site.

This sequence belongs to the shikimate dehydrogenase family. Homodimer.

It carries out the reaction shikimate + NADP(+) = 3-dehydroshikimate + NADPH + H(+). Its pathway is metabolic intermediate biosynthesis; chorismate biosynthesis; chorismate from D-erythrose 4-phosphate and phosphoenolpyruvate: step 4/7. Functionally, involved in the biosynthesis of the chorismate, which leads to the biosynthesis of aromatic amino acids. Catalyzes the reversible NADPH linked reduction of 3-dehydroshikimate (DHSA) to yield shikimate (SA). This Helicobacter hepaticus (strain ATCC 51449 / 3B1) protein is Shikimate dehydrogenase (NADP(+)).